The following is a 968-amino-acid chain: RNA polymerase-associated protein RapA (968 aa).

In terms of domain architecture, Helicase ATP-binding spans Asp164 to Asp334. Asp177–Thr184 lines the ATP pocket. The DEAH box motif lies at Asp280–His283. The Helicase C-terminal domain occupies Arg490–Tyr643.

Belongs to the SNF2/RAD54 helicase family. RapA subfamily. In terms of assembly, interacts with the RNAP. Has a higher affinity for the core RNAP than for the holoenzyme. Its ATPase activity is stimulated by binding to RNAP.

Transcription regulator that activates transcription by stimulating RNA polymerase (RNAP) recycling in case of stress conditions such as supercoiled DNA or high salt concentrations. Probably acts by releasing the RNAP, when it is trapped or immobilized on tightly supercoiled DNA. Does not activate transcription on linear DNA. Probably not involved in DNA repair. The polypeptide is RNA polymerase-associated protein RapA (Erwinia tasmaniensis (strain DSM 17950 / CFBP 7177 / CIP 109463 / NCPPB 4357 / Et1/99)).